Here is a 128-residue protein sequence, read N- to C-terminus: Probable heavy metal-dependent transcriptional regulator HI_0293 (128 aa).

The region spanning 1-69 is the HTH merR-type domain; it reads MNISEAAKLV…LHQIAQLLAL (69 aa). Residues 4 to 23 constitute a DNA-binding region (H-T-H motif); the sequence is SEAAKLVGLSTKQIRDYEKM.

It localises to the cytoplasm. Its function is as follows. Could be a copper-dependent transcriptional activator of the ATPase HI_0290. The polypeptide is Probable heavy metal-dependent transcriptional regulator HI_0293 (Haemophilus influenzae (strain ATCC 51907 / DSM 11121 / KW20 / Rd)).